The chain runs to 333 residues: MHLDHKLPWKTIASHFTLARDGSSPNYNLIALGLSTQDAALGHFSRIFIATIEEFSNTETSKINLNQVDGKLFSDDVLNFPEHHFGLGPHDTNSALNNPLDAKHQELKYWKGRASTASEYGTSPEYSASYSTADGDLADAAKMLVITAAVSDNQAIRREALSALCQLSAHVPMSDLRGLSWGHGFGLSLVASEALKLYMLLNLIEAVQSRGAQQVSLLRVKILLCALGNYSLQNYDFPAQNIPHRAFWHSLGITESWADRQADGVRESDEPVVDPLGLGDDEIHQEARINLKKYLKDCFAILYVYDVFLKQIASEEERKEFWSYEINRVILYL.

Its pathway is mycotoxin biosynthesis. Its function is as follows. Part of the gene cluster that mediates the biosynthesis of gramillins A and B, bicyclic lipopeptides that induce cell death in maize leaves but not in wheat leaves. The nonribosomal peptide synthetase GRA1 incorporates respectively a glutamic adic (Glu), a leucine (Leu), a serine (Ser), a hydroxyglutamine (HOGln), a 2-amino decanoic acid, and 2 cysteins (CysB and CysA). The biosynthesis of 2-amino decanoic acid incorporated in gramillins could be initiated by a fatty acid synthase composed of the alpha and beta subunits FGSG_00036 and FGSG_11656. The cytochrome P450 monooxygenase FGSG_15680 could hydroxylate the fatty acid chain. Subsequent oxidation to the ketone by the oxidoreductase FGSG_00048 and transamination by aminotransferase FGSG_00049 could form 2-amino-decanoic acid. On the other hand, FGSG_15680 could also be responsible for the HO-modified glutamine at the gamma-position. Whether hydroxylation occurs on the fully assembled product or on the Gln residue prior to assembly into the gramillins requires further proof. The thioredoxin FGSG_00043 could also be required for the disulfide-bond formation between CysA and CysB. The specific involvement of the remaining proteins from the cluster is more difficult to discern, but could have broader regulatory (FGSG_00040 and FGSG_11657) or enzymatic functions (FGSG_00044 and FGSG_00045). The final C-domain of GRA1 does not possess the expected sequence of a termination CT domain, often implicated in macrocyclization and release of a cyclopeptidein fungal NRPs; and the thioesterase FGSG_00047 may act in concert with the terminal C-domain of GRA1 to catalyze the formation of the macrocyclic anhydride and release of the products. In Gibberella zeae (strain ATCC MYA-4620 / CBS 123657 / FGSC 9075 / NRRL 31084 / PH-1) (Wheat head blight fungus), this protein is Gramillins biosynthetic cluster protein FGSG_00039.